The chain runs to 503 residues: GMP synthase [glutamine-hydrolyzing] (503 aa).

A Glutamine amidotransferase type-1 domain is found at 1-189 (MVLVLDFGSQ…FLELAGAKRD (189 aa)). Catalysis depends on C78, which acts as the Nucleophile. Catalysis depends on residues H164 and E166. In terms of domain architecture, GMPS ATP-PPase spans 190-378 (WTPEHVLEEL…LGLPDTLRLR (189 aa)). ATP is bound at residue 217–223 (SGGVDSS).

As to quaternary structure, homodimer.

It carries out the reaction XMP + L-glutamine + ATP + H2O = GMP + L-glutamate + AMP + diphosphate + 2 H(+). It functions in the pathway purine metabolism; GMP biosynthesis; GMP from XMP (L-Gln route): step 1/1. Catalyzes the synthesis of GMP from XMP. This chain is GMP synthase [glutamine-hydrolyzing], found in Thermus thermophilus (strain ATCC BAA-163 / DSM 7039 / HB27).